The chain runs to 281 residues: DegV domain-containing protein YqaC (281 aa).

The DegV domain occupies 3-279 (LAVITDSSAD…LNTVAYGISP (277 aa)). Hexadecanoate contacts are provided by Thr-60 and Ser-93.

Functionally, may bind long-chain fatty acids, such as palmitate, and may play a role in lipid transport or fatty acid metabolism. The sequence is that of DegV domain-containing protein YqaC (yqaC) from Lactococcus lactis subsp. lactis (strain IL1403) (Streptococcus lactis).